Here is a 578-residue protein sequence, read N- to C-terminus: Transcriptional regulator SKO1 (578 aa).

Over residues 39–50 (NDAISDVNSVAT) the composition is skewed to polar residues. Disordered stretches follow at residues 39 to 169 (NDAI…TQQP), 176 to 195 (MSGMRKTGLTPNESNIRSGL), 287 to 311 (LQQDQSSQALVGGLPPSQPQPQPQP), and 342 to 489 (ESKP…RKNF). Residues 51–62 (SGSSINNGSSSN) are compositionally biased toward low complexity. Composition is skewed to polar residues over residues 70–80 (NISSVNQQQGV) and 107–132 (GGTTSRQYSNSTNSGSLQSNTDTLGS). Residues 154-169 (PQQQQQPQQQQQTQQP) show a composition bias toward low complexity. Polar residues predominate over residues 184–193 (LTPNESNIRS). Low complexity-rich tracts occupy residues 287–296 (LQQDQSSQAL) and 356–370 (DLNPTADTTTNTTTA). Positions 384-402 (KKAKVAKGKKKEPKSKSKG) are enriched in basic residues. Residues 415–443 (KPEDENVPGKENGNEENHKVEAESKEEHL) are compositionally biased toward basic and acidic residues. The segment covering 445 to 471 (NGNETTTTKTNNTGNSSNGTTTTTTTK) has biased composition (low complexity). A bZIP domain is found at 483-546 (DDKRKNFLER…LLLKEKHNIQ (64 aa)). The tract at residues 485 to 505 (KRKNFLERNRVAASKCRQRKK) is basic motif. The tract at residues 508–515 (IQKMEEEL) is leucine-zipper.

The protein belongs to the bZIP family. Undergoes HOG1-dependent phosphorylation after osmotic stress.

The protein resides in the nucleus. Functionally, transcription repressor involved in cell wall damage response. Regulates 79 caspofungin-responsive genes, including several cell wall biogenesis genes such as CRH11, MNN2, and SKN1. Also controls the expression of pathogenesis and hyphal related genes and represses the yeast-to-hypha transition. Mediates the response to oxidative stress. This is Transcriptional regulator SKO1 (SKO1) from Candida albicans (strain SC5314 / ATCC MYA-2876) (Yeast).